A 434-amino-acid polypeptide reads, in one-letter code: Putative ankyrin repeat protein FPV023 (434 aa).

7 ANK repeats span residues 33 to 62 (RLKI…DPVA), 134 to 163 (LTIS…DINF), 167 to 197 (IGNT…DINI), 201 to 230 (YGTT…DPNS), 236 to 265 (IGTK…DPNI), 269 to 299 (AGVT…DPNI), and 303 to 330 (NGTT…DINI).

The chain is Putative ankyrin repeat protein FPV023 from Fowlpox virus (strain NVSL) (FPV).